The sequence spans 355 residues: 3-isopropylmalate dehydrogenase (355 aa).

Gly78–Glu91 serves as a coordination point for NAD(+). Substrate is bound by residues Arg98, Arg136, and Asp226. Residues Asp226, Asp250, and Asp254 each coordinate Mg(2+). Gly284–Asn296 provides a ligand contact to NAD(+).

The protein belongs to the isocitrate and isopropylmalate dehydrogenases family. LeuB type 1 subfamily. As to quaternary structure, homodimer. It depends on Mg(2+) as a cofactor. Mn(2+) is required as a cofactor.

Its subcellular location is the cytoplasm. The enzyme catalyses (2R,3S)-3-isopropylmalate + NAD(+) = 4-methyl-2-oxopentanoate + CO2 + NADH. The protein operates within amino-acid biosynthesis; L-leucine biosynthesis; L-leucine from 3-methyl-2-oxobutanoate: step 3/4. Catalyzes the oxidation of 3-carboxy-2-hydroxy-4-methylpentanoate (3-isopropylmalate) to 3-carboxy-4-methyl-2-oxopentanoate. The product decarboxylates to 4-methyl-2 oxopentanoate. In Arthrospira platensis (Spirulina platensis), this protein is 3-isopropylmalate dehydrogenase (leuB).